A 548-amino-acid chain; its full sequence is 4-coumarate--CoA ligase CCL1 (548 aa).

ATP-binding positions include 195 to 203 (SSGTTGLPK), 337 to 342 (QGYGMT), Asp426, 438 to 441 (IVDR), and Lys532. The interval 268–337 (EISKLLELIE…EKLPHAKLGQ (70 aa)) is SBD1. Positions 338–405 (GYGMTEAGPV…IRGKQIMKGY (68 aa)) are SBD2.

Belongs to the ATP-dependent AMP-binding enzyme family. In terms of tissue distribution, mostly expressed in glandular trichomes (lupulin glands) after flowering, and, to a lower extent, in stems, leaves, cones and flowers.

The protein localises to the cytoplasm. The catalysed reaction is (E)-4-coumarate + ATP + CoA = (E)-4-coumaroyl-CoA + AMP + diphosphate. Its pathway is secondary metabolite biosynthesis. Involved in the biosynthesis of prenylated phenolics natural products which contribute to the bitter taste of beer and display broad biological activities. Catalyzes the ligation of CoA on (E)-4-coumarate to produce (E)-4-coumaroyl-CoA. This chain is 4-coumarate--CoA ligase CCL1, found in Humulus lupulus (European hop).